Here is a 365-residue protein sequence, read N- to C-terminus: MNLAAMDPQTYDTQLEHKRIKLEQAFAQFETPSVEVFASEPANYRMRAEFRMWHDGDDLYYYMFDKVLNEKVRCDQYLPASVLINQMMSALIAELKPNPSLRHKLFQVDFLSTLSGEILVSLLYHRQLDDQWRADATALKAKLSSQFNVNIIGRARKQKIDLDKDFVVESLQVNDKTFLYKQIENSFTQPNAKVSVKMLEWAIDATQNSQGDLLELYCGNGNFSIALAQNFNRVLATELAKPSVDAAQYNIEVNGIENLQIIRMSAEDFSDAMAKKRSFRRLEGIDLDSYVCNTIFVDPPRAGIDPDTLALVQGYERILYISCNPETLKDNLQQLNETHKVTRFALFDQFPYTDHMETGVLLERR.

Residues glutamine 189, tyrosine 217, asparagine 222, glutamate 238, and aspartate 298 each coordinate S-adenosyl-L-methionine. The Nucleophile role is filled by cysteine 323. Residue glutamate 357 is the Proton acceptor of the active site.

Belongs to the class I-like SAM-binding methyltransferase superfamily. RNA M5U methyltransferase family. TrmA subfamily.

The enzyme catalyses uridine(54) in tRNA + S-adenosyl-L-methionine = 5-methyluridine(54) in tRNA + S-adenosyl-L-homocysteine + H(+). The catalysed reaction is uridine(341) in tmRNA + S-adenosyl-L-methionine = 5-methyluridine(341) in tmRNA + S-adenosyl-L-homocysteine + H(+). Dual-specificity methyltransferase that catalyzes the formation of 5-methyluridine at position 54 (m5U54) in all tRNAs, and that of position 341 (m5U341) in tmRNA (transfer-mRNA). The protein is tRNA/tmRNA (uracil-C(5))-methyltransferase of Shewanella baltica (strain OS155 / ATCC BAA-1091).